Consider the following 327-residue polypeptide: GTP 3',8-cyclase (327 aa).

The Radical SAM core domain occupies 7–232; sequence HHDRQFRYLR…IKRDRTAGPA (226 aa). Arg-16 lines the GTP pocket. Positions 23 and 27 each coordinate [4Fe-4S] cluster. Tyr-29 contributes to the S-adenosyl-L-methionine binding site. Cys-30 is a [4Fe-4S] cluster binding site. Arg-66 lines the GTP pocket. Gly-70 is an S-adenosyl-L-methionine binding site. Thr-97 provides a ligand contact to GTP. Ser-121 lines the S-adenosyl-L-methionine pocket. Lys-158 is a GTP binding site. Met-192 contributes to the S-adenosyl-L-methionine binding site. Residues Cys-255 and Cys-258 each contribute to the [4Fe-4S] cluster site. 260–262 is a GTP binding site; that stretch reads RLR. Position 272 (Cys-272) interacts with [4Fe-4S] cluster.

It belongs to the radical SAM superfamily. MoaA family. As to quaternary structure, monomer and homodimer. Requires [4Fe-4S] cluster as cofactor.

It carries out the reaction GTP + AH2 + S-adenosyl-L-methionine = (8S)-3',8-cyclo-7,8-dihydroguanosine 5'-triphosphate + 5'-deoxyadenosine + L-methionine + A + H(+). It participates in cofactor biosynthesis; molybdopterin biosynthesis. Its function is as follows. Catalyzes the cyclization of GTP to (8S)-3',8-cyclo-7,8-dihydroguanosine 5'-triphosphate. This chain is GTP 3',8-cyclase, found in Synechococcus elongatus (strain ATCC 33912 / PCC 7942 / FACHB-805) (Anacystis nidulans R2).